The chain runs to 584 residues: 2-succinyl-5-enolpyruvyl-6-hydroxy-3-cyclohexene-1-carboxylate synthase (584 aa).

It belongs to the TPP enzyme family. MenD subfamily. Homodimer. It depends on Mg(2+) as a cofactor. The cofactor is Mn(2+). Requires thiamine diphosphate as cofactor.

It catalyses the reaction isochorismate + 2-oxoglutarate + H(+) = 5-enolpyruvoyl-6-hydroxy-2-succinyl-cyclohex-3-ene-1-carboxylate + CO2. The protein operates within quinol/quinone metabolism; 1,4-dihydroxy-2-naphthoate biosynthesis; 1,4-dihydroxy-2-naphthoate from chorismate: step 2/7. It functions in the pathway quinol/quinone metabolism; menaquinone biosynthesis. Functionally, catalyzes the thiamine diphosphate-dependent decarboxylation of 2-oxoglutarate and the subsequent addition of the resulting succinic semialdehyde-thiamine pyrophosphate anion to isochorismate to yield 2-succinyl-5-enolpyruvyl-6-hydroxy-3-cyclohexene-1-carboxylate (SEPHCHC). The protein is 2-succinyl-5-enolpyruvyl-6-hydroxy-3-cyclohexene-1-carboxylate synthase of Bacillus cereus (strain ATCC 14579 / DSM 31 / CCUG 7414 / JCM 2152 / NBRC 15305 / NCIMB 9373 / NCTC 2599 / NRRL B-3711).